We begin with the raw amino-acid sequence, 698 residues long: UvrABC system protein B (698 aa).

The Helicase ATP-binding domain occupies 35–210 (ARLQAGEKDI…TFRVRGDTVE (176 aa)). 48 to 55 (GATGTGKS) contacts ATP. The Beta-hairpin motif lies at 101 to 124 (YYDYYQPEAYVPSSDTYIEKDSSI). The Helicase C-terminal domain occupies 438–604 (QIDDLLAEIN…PLRKRIGDIT (167 aa)). Residues 654–689 (AELIQELTDQMHVAAGELQFEVAARLRDEISDLKKE) form the UVR domain.

It belongs to the UvrB family. Forms a heterotetramer with UvrA during the search for lesions. Interacts with UvrC in an incision complex.

The protein localises to the cytoplasm. Functionally, the UvrABC repair system catalyzes the recognition and processing of DNA lesions. A damage recognition complex composed of 2 UvrA and 2 UvrB subunits scans DNA for abnormalities. Upon binding of the UvrA(2)B(2) complex to a putative damaged site, the DNA wraps around one UvrB monomer. DNA wrap is dependent on ATP binding by UvrB and probably causes local melting of the DNA helix, facilitating insertion of UvrB beta-hairpin between the DNA strands. Then UvrB probes one DNA strand for the presence of a lesion. If a lesion is found the UvrA subunits dissociate and the UvrB-DNA preincision complex is formed. This complex is subsequently bound by UvrC and the second UvrB is released. If no lesion is found, the DNA wraps around the other UvrB subunit that will check the other stand for damage. This Beutenbergia cavernae (strain ATCC BAA-8 / DSM 12333 / CCUG 43141 / JCM 11478 / NBRC 16432 / NCIMB 13614 / HKI 0122) protein is UvrABC system protein B.